Reading from the N-terminus, the 314-residue chain is Ribosomal RNA small subunit methyltransferase H (314 aa).

S-adenosyl-L-methionine contacts are provided by residues glycine 37–histidine 39, aspartate 57, phenylalanine 83, aspartate 105, and glutamine 112.

Belongs to the methyltransferase superfamily. RsmH family.

Its subcellular location is the cytoplasm. The enzyme catalyses cytidine(1402) in 16S rRNA + S-adenosyl-L-methionine = N(4)-methylcytidine(1402) in 16S rRNA + S-adenosyl-L-homocysteine + H(+). Specifically methylates the N4 position of cytidine in position 1402 (C1402) of 16S rRNA. The sequence is that of Ribosomal RNA small subunit methyltransferase H from Thioalkalivibrio sulfidiphilus (strain HL-EbGR7).